We begin with the raw amino-acid sequence, 176 residues long: ATP-dependent protease subunit HslV (176 aa).

The active site involves Thr-2. Na(+) contacts are provided by Gly-157, Cys-160, and Thr-163.

Belongs to the peptidase T1B family. HslV subfamily. In terms of assembly, a double ring-shaped homohexamer of HslV is capped on each side by a ring-shaped HslU homohexamer. The assembly of the HslU/HslV complex is dependent on binding of ATP.

Its subcellular location is the cytoplasm. It catalyses the reaction ATP-dependent cleavage of peptide bonds with broad specificity.. Allosterically activated by HslU binding. Its function is as follows. Protease subunit of a proteasome-like degradation complex believed to be a general protein degrading machinery. In Escherichia coli O139:H28 (strain E24377A / ETEC), this protein is ATP-dependent protease subunit HslV.